The sequence spans 490 residues: Homoserine O-acetyltransferase (490 aa).

An AB hydrolase-1 domain is found at 47–355 (NAILVCHALT…DYGHDAFLLE (309 aa)). The Nucleophile role is filled by Ser-152. Arg-222 is a substrate binding site. Catalysis depends on residues Asp-316 and His-349. Residue Asp-350 participates in substrate binding. 2 consecutive CBS domains span residues 376–436 (MKTD…LEDV) and 437–490 (MTKD…ISSY).

The protein belongs to the AB hydrolase superfamily. MetX family. Homodimer.

The protein localises to the cytoplasm. It carries out the reaction L-homoserine + acetyl-CoA = O-acetyl-L-homoserine + CoA. It functions in the pathway amino-acid biosynthesis; L-methionine biosynthesis via de novo pathway; O-acetyl-L-homoserine from L-homoserine: step 1/1. Its function is as follows. Transfers an acetyl group from acetyl-CoA to L-homoserine, forming acetyl-L-homoserine. This is Homoserine O-acetyltransferase from Methanobrevibacter ruminantium (strain ATCC 35063 / DSM 1093 / JCM 13430 / OCM 146 / M1) (Methanobacterium ruminantium).